Here is a 1781-residue protein sequence, read N- to C-terminus: BCL-6 corepressor-like protein 1 (1781 aa).

Disordered stretches follow at residues 64–136 (AVGS…SHSR) and 337–362 (ASTP…GPPS). Composition is skewed to polar residues over residues 66-82 (GSGS…NTTE) and 127-136 (PDSTEASHSR). Residue serine 490 is modified to Phosphoserine. The segment covering 521–531 (SCTSPSSSTNS) has biased composition (low complexity). Disordered regions lie at residues 521-545 (SCTS…LADT), 561-616 (LLPA…EMPL), 733-777 (NRDP…STVK), 869-895 (PLGS…PEQD), and 933-960 (QPSS…TPKM). The span at 581–594 (TDQQTEGTSVTFSP) shows a compositional bias: polar residues. Serine 593 and serine 607 each carry phosphoserine. Residue lysine 741 forms a Glycyl lysine isopeptide (Lys-Gly) (interchain with G-Cter in SUMO2) linkage. Serine 1024 is subject to Phosphoserine. Lysine 1087 participates in a covalent cross-link: Glycyl lysine isopeptide (Lys-Gly) (interchain with G-Cter in SUMO2). The tract at residues 1100-1484 (WQPDEETESL…PTARQIPPEA (385 aa)) is disordered. The segment covering 1116-1127 (CNKEKEIEEEPR) has biased composition (basic and acidic residues). Serine 1162 carries the post-translational modification Phosphoserine. Over residues 1176–1185 (VRGKHKHRKP) the composition is skewed to basic residues. Residues 1195–1213 (KRTDGHEEGSLEKKAKNSF) show a composition bias toward basic and acidic residues. Over residues 1222–1234 (STRTRSQSGSICS) the composition is skewed to polar residues. 2 stretches are compositionally biased toward basic and acidic residues: residues 1271-1284 (TQRD…HAQD) and 1297-1307 (RAREMPWRTEA). The span at 1314 to 1324 (TNEEEEDDEEE) shows a compositional bias: acidic residues. The segment covering 1328–1339 (KRKKRRRQKSRK) has biased composition (basic residues). The span at 1350 to 1362 (EEQRRKGRADSKA) shows a compositional bias: basic and acidic residues. Polar residues-rich tracts occupy residues 1381–1394 (LLLS…SDSP) and 1437–1449 (RWSQ…SKSP). ANK repeat units follow at residues 1493-1523 (AGET…DVNH), 1527-1556 (AGYT…NVNC), and 1560-1589 (DGTR…DPTL). The PCGF Ub-like fold domain (PUFD); required for the interaction with the KDM2B-SKP1 heterodimeric complex stretch occupies residues 1664–1781 (DDFMFELSDK…SEVEYQSWSS (118 aa)).

Belongs to the BCOR family. In terms of assembly, interacts with PCGF1, forming heterodimers. The PCGF1-BCORL1 heterodimeric complex interacts with the KDM2B-SKP1 heterodimeric complex to form a homotetrameric polycomb repression complex 1 (PRC1.1). Interacts with SKP1. Interacts with CTBP1, HDAC4, HDAC5 and HDAC7. As to expression, highly expressed in lung and testis.

The protein resides in the nucleus. Its function is as follows. Transcriptional corepressor. May specifically inhibit gene expression when recruited to promoter regions by sequence specific DNA-binding proteins such as BCL6. This repression may be mediated at least in part by histone deacetylase activities which can associate with this corepressor. The sequence is that of BCL-6 corepressor-like protein 1 (Bcorl1) from Mus musculus (Mouse).